We begin with the raw amino-acid sequence, 122 residues long: Large ribosomal subunit protein uL14 (122 aa).

It belongs to the universal ribosomal protein uL14 family. In terms of assembly, part of the 50S ribosomal subunit. Forms a cluster with proteins L3 and L19. In the 70S ribosome, L14 and L19 interact and together make contacts with the 16S rRNA in bridges B5 and B8.

Binds to 23S rRNA. Forms part of two intersubunit bridges in the 70S ribosome. The sequence is that of Large ribosomal subunit protein uL14 from Clostridioides difficile (strain 630) (Peptoclostridium difficile).